The primary structure comprises 844 residues: 3',5'-cyclic-AMP phosphodiesterase 4A (844 aa).

Positions 1-124 (MEPPAAPSER…RSPLDSQASP (124 aa)) are disordered. A Phosphoserine modification is found at Ser-13. A compositionally biased stretch (low complexity) spans 36–46 (QPRTPIRIQQR). Positions 51–78 (SAERSEPERSPHRPIERADAVDTGDRPG) are enriched in basic and acidic residues. Over residues 82-91 (TRMSWPSSFH) the composition is skewed to polar residues. Residues Ser-147, Ser-152, Ser-160, Ser-204, and Ser-333 each carry the phosphoserine modification. The PDEase domain maps to 343-672 (VKTDQEDLLA…DWYHSAIRQS (330 aa)). Lys-344 participates in a covalent cross-link: Glycyl lysine isopeptide (Lys-Gly) (interchain with G-Cter in SUMO). His-419 acts as the Proton donor in catalysis. His-419 is a 3',5'-cyclic AMP binding site. AMP contacts are provided by His-419 and His-423. 4 residues coordinate Zn(2+): His-423, His-459, Asp-460, and Asp-577. AMP-binding residues include Asp-460, Asp-577, Gln-628, and Phe-631. Asp-460 is a Mg(2+) binding site. Asp-460 serves as a coordination point for Mn(2+). 3',5'-cyclic AMP contacts are provided by Gln-628 and Phe-631. Ser-672 and Ser-674 each carry phosphoserine. The tract at residues 819–844 (ACSGTSGDNSAVISAPGRWGSGGDPA) is disordered. Over residues 820–830 (CSGTSGDNSAV) the composition is skewed to polar residues.

This sequence belongs to the cyclic nucleotide phosphodiesterase family. PDE4 subfamily. Interacts with LYN (via SH3 domain). Interacts with ARRB2. The cofactor is Zn(2+). Mg(2+) is required as a cofactor. It depends on Mn(2+) as a cofactor. In terms of processing, proteolytically cleaved by CASP3.

The protein resides in the cytoplasm. It is found in the cytosol. The protein localises to the membrane. The catalysed reaction is 3',5'-cyclic AMP + H2O = AMP + H(+). Its pathway is purine metabolism; 3',5'-cyclic AMP degradation; AMP from 3',5'-cyclic AMP: step 1/1. Its activity is regulated as follows. Inhibited by rolipram and diazepam. Functionally, hydrolyzes the second messenger 3',5'-cyclic AMP (cAMP), which is a key regulator of many important physiological processes. In terms of biological role, efficiently hydrolyzes cAMP. The sequence is that of 3',5'-cyclic-AMP phosphodiesterase 4A (Pde4a) from Mus musculus (Mouse).